The sequence spans 359 residues: Putative nucleotidyltransferase MAB21L1 (359 aa).

A ribonucleoside 5'-triphosphate is bound by residues 23-24 (RK) and 63-66 (FEGL). Residues Glu-73 and Glu-75 each coordinate Mg(2+). A ribonucleoside 5'-triphosphate contacts are provided by residues Lys-248 and 252–255 (SLLK).

The protein belongs to the mab-21 family. Monomer. Homodecamer; composed of 2 back to back homopentamers. The protein may exist as monomer in solution and oiligomerizes upon ligand binding.

It localises to the nucleus. In terms of biological role, putative nucleotidyltransferase required for several aspects of embryonic development including normal development of the eye. It is unclear whether it displays nucleotidyltransferase activity in vivo. Binds single-stranded RNA (ssRNA). This is Putative nucleotidyltransferase MAB21L1 (mab21l1) from Danio rerio (Zebrafish).